The following is a 290-amino-acid chain: S-adenosylmethionine decarboxylase proenzyme (290 aa).

The active-site Schiff-base intermediate with substrate; via pyruvic acid is the S138. A Pyruvic acid (Ser); by autocatalysis modification is found at S138. H143 functions as the Proton acceptor; for processing activity in the catalytic mechanism. Catalysis depends on C166, which acts as the Proton donor; for catalytic activity.

The protein belongs to the prokaryotic AdoMetDC family. Type 2 subfamily. Heterooctamer of four alpha and four beta chains arranged as a tetramer of alpha/beta heterodimers. Pyruvate is required as a cofactor. Post-translationally, is synthesized initially as an inactive proenzyme. Formation of the active enzyme involves a self-maturation process in which the active site pyruvoyl group is generated from an internal serine residue via an autocatalytic post-translational modification. Two non-identical subunits are generated from the proenzyme in this reaction, and the pyruvate is formed at the N-terminus of the alpha chain, which is derived from the carboxyl end of the proenzyme. The post-translation cleavage follows an unusual pathway, termed non-hydrolytic serinolysis, in which the side chain hydroxyl group of the serine supplies its oxygen atom to form the C-terminus of the beta chain, while the remainder of the serine residue undergoes an oxidative deamination to produce ammonia and the pyruvoyl group blocking the N-terminus of the alpha chain.

It carries out the reaction S-adenosyl-L-methionine + H(+) = S-adenosyl 3-(methylsulfanyl)propylamine + CO2. It participates in amine and polyamine biosynthesis; S-adenosylmethioninamine biosynthesis; S-adenosylmethioninamine from S-adenosyl-L-methionine: step 1/1. Its function is as follows. Catalyzes the decarboxylation of S-adenosylmethionine to S-adenosylmethioninamine (dcAdoMet), the propylamine donor required for the synthesis of the polyamines spermine and spermidine from the diamine putrescine. In Heliobacterium modesticaldum (strain ATCC 51547 / Ice1), this protein is S-adenosylmethionine decarboxylase proenzyme.